The primary structure comprises 1045 residues: Probable sucrose-phosphate synthase (1045 aa).

2 stretches are compositionally biased toward basic and acidic residues: residues 93 to 115 (ENEEAQRKTKRRMELERGRREAT) and 124 to 137 (EGEKDISAHGDSTR). Disordered regions lie at residues 93–141 (ENEE…PRLP), 222–243 (WSYGEPTEMLNPRDSNGFDDDD), and 662–692 (IASSRQRQPQWQRSSDEGLDNQEPESPSDSL). Low complexity predominate over residues 664-674 (SSRQRQPQWQR).

Belongs to the glycosyltransferase 1 family. As to quaternary structure, homodimer or homotetramer. As to expression, predominantly active in tap root.

The enzyme catalyses beta-D-fructose 6-phosphate + UDP-alpha-D-glucose = sucrose 6(F)-phosphate + UDP + H(+). It participates in glycan biosynthesis; sucrose biosynthesis; sucrose from D-fructose 6-phosphate and UDP-alpha-D-glucose: step 1/2. Activity is regulated by phosphorylation and moderated by concentration of metabolites and light. Functionally, plays a role in photosynthetic sucrose synthesis by catalyzing the rate-limiting step of sucrose biosynthesis from UDP-glucose and fructose- 6-phosphate. Involved in the regulation of carbon partitioning in the leaves of plants. May regulate the synthesis of sucrose and therefore play a major role as a limiting factor in the export of photoassimilates out of the leaf. Plays a role for sucrose availability that is essential for plant growth and fiber elongation. The protein is Probable sucrose-phosphate synthase (SPS) of Beta vulgaris (Sugar beet).